We begin with the raw amino-acid sequence, 237 residues long: RING-H2 finger protein ATL57 (237 aa).

Residues Ala51 to Phe71 traverse the membrane as a helical segment. Residues Cys140 to Arg182 form an RING-type; atypical zinc finger.

The protein belongs to the RING-type zinc finger family. ATL subfamily.

The protein resides in the membrane. It carries out the reaction S-ubiquitinyl-[E2 ubiquitin-conjugating enzyme]-L-cysteine + [acceptor protein]-L-lysine = [E2 ubiquitin-conjugating enzyme]-L-cysteine + N(6)-ubiquitinyl-[acceptor protein]-L-lysine.. Its pathway is protein modification; protein ubiquitination. This Arabidopsis thaliana (Mouse-ear cress) protein is RING-H2 finger protein ATL57 (ATL57).